The chain runs to 135 residues: Protein Wnt-7c (135 aa).

2 disulfides stabilise this stretch: C3–C17 and C5–C12. S9 is lipidated: O-palmitoleoyl serine; by PORCN. N-linked (GlcNAc...) asparagine glycans are attached at residues N62, N85, and N98. 3 cysteine pairs are disulfide-bonded: C81/C112, C97/C107, and C134/C135.

Belongs to the Wnt family. In terms of processing, palmitoleoylation is required for efficient binding to frizzled receptors. Depalmitoleoylation leads to Wnt signaling pathway inhibition.

Its subcellular location is the secreted. The protein resides in the extracellular space. The protein localises to the extracellular matrix. Ligand for members of the frizzled family of seven transmembrane receptors. Probable developmental protein. May be a signaling molecule which affects the development of discrete regions of tissues. Is likely to signal over only few cell diameters. In Xenopus laevis (African clawed frog), this protein is Protein Wnt-7c (wnt7c).